We begin with the raw amino-acid sequence, 104 residues long: Transcription elongation factor A protein-like 9 (104 aa).

Residues 1–48 are disordered; the sequence is MKPCQKMEGNLEKEDEPKPEEEPKPEEKPEEGQEPEEEEKSEETFRER. The span at 9 to 31 shows a compositional bias: basic and acidic residues; that stretch reads GNLEKEDEPKPEEEPKPEEKPEE. The segment covering 32-41 has biased composition (acidic residues); sequence GQEPEEEEKS.

It belongs to the TFS-II family. TFA subfamily.

It is found in the nucleus. Functionally, may be involved in transcriptional regulation. In Mus musculus (Mouse), this protein is Transcription elongation factor A protein-like 9 (Tceal9).